Reading from the N-terminus, the 138-residue chain is RuBisCO chaperone RbcX (138 aa).

Residues 118–138 form a disordered region; it reads VDNFPSETSNGESNNNDSPPS. Positions 122–138 are enriched in polar residues; that stretch reads PSETSNGESNNNDSPPS.

It belongs to the RbcX family. In terms of assembly, homodimer. Interacts with the exposed C-terminal peptide of RbcL via its central cleft, contacts a second RbcL monomer via its peripheral polar surface.

The protein localises to the carboxysome. Its subcellular location is the cytoplasm. An RbcL-specific chaperone. The central cleft of the RbcX homodimer (RbcX2) binds the C-terminus of an RbcL monomer, stabilizing the C-terminus and probably preventing its reassociation with chaperonin GroEL-ES. At the same time the peripheral region of RbcX2 binds a second RbcL monomer, bridging the RbcL homodimers in the correct orientation. The RbcX2(2)-bound RbcL dimers then assemble into the RbcL8 core (RbcL8-(RbcX2)8). RbcS binding triggers the release of RbcX2. The sequence is that of RuBisCO chaperone RbcX from Synechocystis sp. (strain ATCC 27184 / PCC 6803 / Kazusa).